The sequence spans 207 residues: ADP-ribose pyrophosphatase (207 aa).

Substrate-binding positions include 37–38 (RE) and R64. In terms of domain architecture, Nudix hydrolase spans 41-172 (EHFGAVAIVA…EIVNSIAIAG (132 aa)). A76 contacts Mg(2+). A Nudix box motif is present at residues 77–99 (GLLDVAGEPPHLTAARELREEVG). Substrate is bound at residue L78. The Mg(2+) site is built by E93 and E97. Substrate-binding positions include 114-116 (APG) and E120. A Mg(2+)-binding site is contributed by E142. The Proton acceptor role is filled by E142.

This sequence belongs to the Nudix hydrolase family. In terms of assembly, homodimer. Requires Mg(2+) as cofactor. Mn(2+) serves as cofactor.

It carries out the reaction ADP-D-ribose + H2O = D-ribose 5-phosphate + AMP + 2 H(+). The enzyme catalyses 8-oxo-dGDP + H2O = 8-oxo-dGMP + phosphate + H(+). It catalyses the reaction 8-oxo-GDP + H2O = 8-oxo-GMP + phosphate + H(+). Functionally, catalyzes the hydrolysis of ADP-ribose (ADPR) to AMP and ribose-5-phosphate. Can also hydrolyze ADP-mannose and ADP-glucose, with lower efficiency. Has weaker activity with NAD, GDP-sugars and UDP-sugars. Also catalyzes the conversion of 8-oxo-dGDP to 8-oxo-dGMP, and 8-oxo-GDP to 8-oxo-GMP. Functions in concert with MutT1 to detoxify 8-oxo-dGTP to 8-oxo-dGMP and may play an important role in supporting cellular growth under oxidative stress. The catalytic efficiency is much higher for the hydrolysis of ADPR than 8-oxo-dGTP, suggesting a more relevant biological role in hydrolysis of ADPR. The polypeptide is ADP-ribose pyrophosphatase (Mycobacterium tuberculosis (strain ATCC 25618 / H37Rv)).